The chain runs to 77 residues: Large ribosomal subunit protein uL29 (77 aa).

This sequence belongs to the universal ribosomal protein uL29 family.

This is Large ribosomal subunit protein uL29 from Cutibacterium acnes (strain DSM 16379 / KPA171202) (Propionibacterium acnes).